A 119-amino-acid polypeptide reads, in one-letter code: Large ribosomal subunit protein uL18 (119 aa).

Belongs to the universal ribosomal protein uL18 family. As to quaternary structure, part of the 50S ribosomal subunit; part of the 5S rRNA/L5/L18/L25 subcomplex. Contacts the 5S and 23S rRNAs.

This is one of the proteins that bind and probably mediate the attachment of the 5S RNA into the large ribosomal subunit, where it forms part of the central protuberance. In Cupriavidus taiwanensis (strain DSM 17343 / BCRC 17206 / CCUG 44338 / CIP 107171 / LMG 19424 / R1) (Ralstonia taiwanensis (strain LMG 19424)), this protein is Large ribosomal subunit protein uL18.